The chain runs to 219 residues: Ribose-5-phosphate isomerase A (219 aa).

Substrate is bound by residues 28 to 31, 81 to 84, and 94 to 97; these read SGST, DGAD, and KGGG. Glu103 functions as the Proton acceptor in the catalytic mechanism. Lys121 serves as a coordination point for substrate.

This sequence belongs to the ribose 5-phosphate isomerase family. In terms of assembly, homodimer.

It catalyses the reaction aldehydo-D-ribose 5-phosphate = D-ribulose 5-phosphate. The protein operates within carbohydrate degradation; pentose phosphate pathway; D-ribose 5-phosphate from D-ribulose 5-phosphate (non-oxidative stage): step 1/1. Its function is as follows. Catalyzes the reversible conversion of ribose-5-phosphate to ribulose 5-phosphate. The protein is Ribose-5-phosphate isomerase A of Haemophilus influenzae (strain PittEE).